Here is a 486-residue protein sequence, read N- to C-terminus: Cytochrome P450 monooxygenase 1 (486 aa).

The first 21 residues, 1-21 (MSHFLPTLILTSLTLVAYVLA), serve as a signal peptide directing secretion. Residue N346 is glycosylated (N-linked (GlcNAc...) asparagine). C430 serves as a coordination point for heme. N434 carries an N-linked (GlcNAc...) asparagine glycan.

This sequence belongs to the cytochrome P450 family. The cofactor is heme.

The protein operates within mycotoxin biosynthesis. Cytochrome P450 monooxygenase; part of the gene cluster that mediates the biosynthesis of aphidicolin, a specific inhibitor of eukaryotic DNA synthesis and DNA polymerase alpha. The geranylgeranyl pyrophosphate synthase GGS is required for supplying a sufficient amount of geranylgeranyl diphosphate (GGDP), the general precursor of diterpenes. The diterpene synthase ACS then catalyzes the conversion of geranylgeranyl diphosphate to aphidicolan-16-beta-ol via the intermediate syn-copalyldiphosphate (syn-CDP). In addition to aphidicolan-16-beta-ol, the enzyme also produces low levels of amphidicol-15-ene and amphidicol-16-ene. The cytochrome P450 monooxygenase P450-2 then catalyzes the two-step hydroxylation from aphidicolan-16-beta-ol to 3-deoxyaphidicolin via a 17,3-deoxyaphidicolin intermediate. Finally, the cytochrome P450 monooxygenase P450-1 converts 3-deoxyaphidicolin to aphidicolin. The chain is Cytochrome P450 monooxygenase 1 (PbP450-1) from Neocamarosporium betae (Beet black rot fungus).